We begin with the raw amino-acid sequence, 283 residues long: Phosphatidylserine decarboxylase proenzyme (283 aa).

Catalysis depends on charge relay system; for autoendoproteolytic cleavage activity residues D89, H146, and S249. The active-site Schiff-base intermediate with substrate; via pyruvic acid; for decarboxylase activity is the S249. S249 is subject to Pyruvic acid (Ser); by autocatalysis.

The protein belongs to the phosphatidylserine decarboxylase family. PSD-B subfamily. Prokaryotic type I sub-subfamily. In terms of assembly, heterodimer of a large membrane-associated beta subunit and a small pyruvoyl-containing alpha subunit. The cofactor is pyruvate. Is synthesized initially as an inactive proenzyme. Formation of the active enzyme involves a self-maturation process in which the active site pyruvoyl group is generated from an internal serine residue via an autocatalytic post-translational modification. Two non-identical subunits are generated from the proenzyme in this reaction, and the pyruvate is formed at the N-terminus of the alpha chain, which is derived from the carboxyl end of the proenzyme. The autoendoproteolytic cleavage occurs by a canonical serine protease mechanism, in which the side chain hydroxyl group of the serine supplies its oxygen atom to form the C-terminus of the beta chain, while the remainder of the serine residue undergoes an oxidative deamination to produce ammonia and the pyruvoyl prosthetic group on the alpha chain. During this reaction, the Ser that is part of the protease active site of the proenzyme becomes the pyruvoyl prosthetic group, which constitutes an essential element of the active site of the mature decarboxylase.

The protein localises to the cell membrane. The enzyme catalyses a 1,2-diacyl-sn-glycero-3-phospho-L-serine + H(+) = a 1,2-diacyl-sn-glycero-3-phosphoethanolamine + CO2. The protein operates within phospholipid metabolism; phosphatidylethanolamine biosynthesis; phosphatidylethanolamine from CDP-diacylglycerol: step 2/2. Catalyzes the formation of phosphatidylethanolamine (PtdEtn) from phosphatidylserine (PtdSer). The sequence is that of Phosphatidylserine decarboxylase proenzyme from Legionella pneumophila subsp. pneumophila (strain Philadelphia 1 / ATCC 33152 / DSM 7513).